We begin with the raw amino-acid sequence, 328 residues long: Flap endonuclease 1 (328 aa).

The N-domain stretch occupies residues 1–98; sequence MGVKFKDITN…ETQEERINIK (98 aa). Residues D27, D80, E152, E154, D173, D175, and D227 each coordinate Mg(2+). An I-domain region spans residues 116-248; it reads AARKYAARTT…KGIKLIHKYG (133 aa). Positions 320–328 are interaction with PCNA; it reads AQSSLEDWF.

It belongs to the XPG/RAD2 endonuclease family. FEN1 subfamily. In terms of assembly, interacts with PCNA. PCNA stimulates the nuclease activity without altering cleavage specificity. Requires Mg(2+) as cofactor.

In terms of biological role, structure-specific nuclease with 5'-flap endonuclease and 5'-3' exonuclease activities involved in DNA replication and repair. During DNA replication, cleaves the 5'-overhanging flap structure that is generated by displacement synthesis when DNA polymerase encounters the 5'-end of a downstream Okazaki fragment. Binds the unpaired 3'-DNA end and kinks the DNA to facilitate 5' cleavage specificity. Cleaves one nucleotide into the double-stranded DNA from the junction in flap DNA, leaving a nick for ligation. Also involved in the base excision repair (BER) pathway. Acts as a genome stabilization factor that prevents flaps from equilibrating into structures that lead to duplications and deletions. Also possesses 5'-3' exonuclease activity on nicked or gapped double-stranded DNA. This Methanosphaera stadtmanae (strain ATCC 43021 / DSM 3091 / JCM 11832 / MCB-3) protein is Flap endonuclease 1.